A 198-amino-acid polypeptide reads, in one-letter code: Small ribosomal subunit protein uS4z (198 aa).

Serine 68 carries the phosphoserine modification. In terms of domain architecture, S4 RNA-binding spans 109–180 (RRLQTIVFKS…PGRVKRRNEK (72 aa)). Residues 163–198 (TSPFGGGRPGRVKRRNEKSASKKASGGGDADGDDEE) are disordered.

This sequence belongs to the universal ribosomal protein uS4 family. In terms of assembly, binds to the translation initiation factors TIF3E1.

The polypeptide is Small ribosomal subunit protein uS4z (RPS9B) (Arabidopsis thaliana (Mouse-ear cress)).